The primary structure comprises 696 residues: METKVQVECGGRTITIETGKMAKQASGAVVVSSGDTRVLVTAVATKTAKEGQDFFPLTVNYQEKAYAGGKIPGGFFKREARPSDNETLTCRLIDRPIRPLFPDNFLNDTQIMATVISADKDNDPGILSMVGASAALMVSDIPFQGPIAGVKVGRIDGRFVANPGFEEMEKSDIEIVVAASKDAIIMVEGSAAEVSEEDMLEAIFFGHAAIQGLLAAQVELAEKAGVAKREVLPPVVNEALKAKVKELAYSRMKEAVRIKSKVERHNTIDTITGEVLTALAEEFEGAAKEIKGFLGDFEYDLVREHIIKDGERIDGRDTKTIRQITTEVGLLPRAHGSALFTRGETQALVVATLGTSIDEQRIDSLFGESKKRFLLHYNFPPFSVGETSFRLAPGRREIGHGMLAERALARVVPKHESFPYTIRIVSDILESNGSSSMASVCGGSMSMMDAGIPIKAPVAGIAMGLIKEGDDFAILSDILGDEDHLGDMDFKVAGTSTGVTALQMDIKIGGVTREIMGVALKQAHEGRLHILSKMAETIGTSKAELSTFAPRITTIYVKTDKIRDVIGSGGKNIRGITEATGVTIDIDDTGKINIASTDKAACDMAIKMIRDLTAEAEEGKLYMGLVKKVMEFGAFVEIFPGTDGLVHISELDTERVKNVTDVLKEGDKVLVKCIGIDKQGKIKLSRKEALGASLPE.

Mg(2+)-binding residues include Asp-483 and Asp-489. One can recognise a KH domain in the interval 550–609 (PRITTIYVKTDKIRDVIGSGGKNIRGITEATGVTIDIDDTGKINIASTDKAACDMAIKMI). Positions 619 to 687 (GKLYMGLVKK…KQGKIKLSRK (69 aa)) constitute an S1 motif domain.

Belongs to the polyribonucleotide nucleotidyltransferase family. Mg(2+) serves as cofactor.

The protein resides in the cytoplasm. The enzyme catalyses RNA(n+1) + phosphate = RNA(n) + a ribonucleoside 5'-diphosphate. Its function is as follows. Involved in mRNA degradation. Catalyzes the phosphorolysis of single-stranded polyribonucleotides processively in the 3'- to 5'-direction. The sequence is that of Polyribonucleotide nucleotidyltransferase from Geotalea daltonii (strain DSM 22248 / JCM 15807 / FRC-32) (Geobacter daltonii).